Consider the following 100-residue polypeptide: Urease subunit gamma (100 aa).

It belongs to the urease gamma subunit family. As to quaternary structure, heterotrimer of UreA (gamma), UreB (beta) and UreC (alpha) subunits. Three heterotrimers associate to form the active enzyme.

It is found in the cytoplasm. The catalysed reaction is urea + 2 H2O + H(+) = hydrogencarbonate + 2 NH4(+). It participates in nitrogen metabolism; urea degradation; CO(2) and NH(3) from urea (urease route): step 1/1. The sequence is that of Urease subunit gamma from Flavobacterium johnsoniae (strain ATCC 17061 / DSM 2064 / JCM 8514 / BCRC 14874 / CCUG 350202 / NBRC 14942 / NCIMB 11054 / UW101) (Cytophaga johnsonae).